Consider the following 601-residue polypeptide: Glutathione-regulated potassium-efflux system protein KefB (601 aa).

Transmembrane regions (helical) follow at residues 5–25 (DLLL…PLAA), 29–49 (IGAV…GLGF), 55–75 (EILH…GLEL), 87–107 (IFGV…GLLM), 115–135 (AAVI…LQLM), 152–172 (VLLF…LLAG), 177–197 (HFDW…LIGG), 207–227 (FIAA…LVLG), 230–250 (LFMD…GILL), 261–281 (IAID…VGMA), 284–304 (LGVL…LVAV), 326–346 (FAGV…TAAS), and 356–376 (ALLL…MKLI). Residues 400-518 (KPQVIVVGFG…QAGVTNFSRE (119 aa)) enclose the RCK N-terminal domain.

It belongs to the monovalent cation:proton antiporter 2 (CPA2) transporter (TC 2.A.37) family. KefB subfamily. As to quaternary structure, interacts with the regulatory subunit KefG.

The protein resides in the cell inner membrane. Pore-forming subunit of a potassium efflux system that confers protection against electrophiles. Catalyzes K(+)/H(+) antiport. The polypeptide is Glutathione-regulated potassium-efflux system protein KefB (Enterobacter sp. (strain 638)).